A 623-amino-acid polypeptide reads, in one-letter code: DEAD-box ATP-dependent RNA helicase 52C (623 aa).

The disordered stretch occupies residues Met1 to Asp120. Residues Ala10–Ala29 are compositionally biased toward low complexity. Residues Ala54–Ala69 show a composition bias toward pro residues. A compositionally biased stretch (low complexity) spans Ala70–Met83. Over residues Gly84–Gly97 the composition is skewed to gly residues. Residues Gly155–Arg183 carry the Q motif motif. The Helicase ATP-binding domain maps to Ile186–Leu372. Ala199–Thr206 contributes to the ATP binding site. Positions Asp316–Asp319 match the DEAD box motif. In terms of domain architecture, Helicase C-terminal spans His399–Ala550. The segment at Pro553–Ser595 is disordered. Gly residues predominate over residues Tyr555–Phe571. Positions Gly572–Ser581 are enriched in basic and acidic residues. The span at Gly583–Ser595 shows a compositional bias: gly residues.

Belongs to the DEAD box helicase family. DDX3/DED1 subfamily.

The enzyme catalyses ATP + H2O = ADP + phosphate + H(+). This chain is DEAD-box ATP-dependent RNA helicase 52C, found in Oryza sativa subsp. japonica (Rice).